We begin with the raw amino-acid sequence, 494 residues long: Rho GTPase-activating protein 19 (494 aa).

An N-acetylalanine modification is found at Ala-2. Ser-7 and Ser-31 each carry phosphoserine. The Rho-GAP domain occupies 102-308 (MSLKRKEKGV…FMIKHSQKLF (207 aa)). The interval 399-451 (QSLTQTPGREPSTPRVQKRARSRSFSGLIKRKVLGSQMTSEKKNSSPAPESVA) is disordered. Phosphoserine occurs at positions 422, 438, and 470. Residue Thr-478 is modified to Phosphothreonine.

In terms of biological role, GTPase activator for the Rho-type GTPases by converting them to an inactive GDP-bound state. The sequence is that of Rho GTPase-activating protein 19 (Arhgap19) from Mus musculus (Mouse).